A 361-amino-acid polypeptide reads, in one-letter code: MSPECARAAGDAPLRSLEQANRTRFSFFSDVKGDHRLLLAAVETTVLALIFAVSLLGNVCALVLVARRRRRGTTACLVLNLFCADLLFISAIPLVLAVRWTEAWLLGPVACHLLFYLMTLSGSVTILTLAAVSLERMVCIVHLQRGVRGPGRRARAVLLTLIWGYSAVAALPLCVFFRVVPQRLPGADQEISICTLIWPTIAGEISWDVSFVTLNFLVPGLVIVISYSKILQITKASRKRLTVSLAYSESHQIRVSQQDFRLFRTLFLLMVSFFIMWSPIIITILLILIQNFKQDLVIWPSLFFWVVAFTFANSALNPILYNMTLCRNEWKKIFCCFWFPEKGAILTDTSVKRNDLSVISG.

The Extracellular segment spans residues 1-45; the sequence is MSPECARAAGDAPLRSLEQANRTRFSFFSDVKGDHRLLLAAVETT. Residue N21 is glycosylated (N-linked (GlcNAc...) asparagine). The chain crosses the membrane as a helical span at residues 46-66; it reads VLALIFAVSLLGNVCALVLVA. Over 67-77 the chain is Cytoplasmic; that stretch reads RRRRRGTTACL. A helical transmembrane segment spans residues 78-98; sequence VLNLFCADLLFISAIPLVLAV. Residues 99-112 lie on the Extracellular side of the membrane; that stretch reads RWTEAWLLGPVACH. An intrachain disulfide couples C111 to C194. Residues 113-133 traverse the membrane as a helical segment; sequence LLFYLMTLSGSVTILTLAAVS. The Cytoplasmic portion of the chain corresponds to 134–156; it reads LERMVCIVHLQRGVRGPGRRARA. Residues 157–177 form a helical membrane-spanning segment; that stretch reads VLLTLIWGYSAVAALPLCVFF. Over 178–204 the chain is Extracellular; sequence RVVPQRLPGADQEISICTLIWPTIAGE. A helical membrane pass occupies residues 205 to 225; the sequence is ISWDVSFVTLNFLVPGLVIVI. Over 226-268 the chain is Cytoplasmic; sequence SYSKILQITKASRKRLTVSLAYSESHQIRVSQQDFRLFRTLFL. Residues 269–289 traverse the membrane as a helical segment; sequence LMVSFFIMWSPIIITILLILI. Over 290-295 the chain is Extracellular; sequence QNFKQD. Residues 296 to 316 traverse the membrane as a helical segment; the sequence is LVIWPSLFFWVVAFTFANSAL. Residues 317 to 361 are Cytoplasmic-facing; that stretch reads NPILYNMTLCRNEWKKIFCCFWFPEKGAILTDTSVKRNDLSVISG. Phosphothreonine occurs at positions 347 and 349. S350, S357, and S360 each carry phosphoserine.

The protein belongs to the G-protein coupled receptor 1 family. As to quaternary structure, interacts (via C-terminus) with ARRB2 following LCFAs stimulation. Post-translationally, phosphorylated at two clusters of Ser and Thr residues located in the intracellular C-terminus. Prerequisite for FFAR4 internalization via an ARRB2-dependent pathway. Highly expressed in lung and colon.

The protein localises to the cell membrane. It is found in the endosome membrane. Its subcellular location is the lysosome membrane. The protein resides in the cell projection. It localises to the cilium membrane. Functionally, G-protein-coupled receptor for long-chain fatty acids (LCFAs) with a major role in adipogenesis, energy metabolism and inflammation. Signals via G-protein and beta-arrestin pathways. LCFAs sensing initiates activation of phosphoinositidase C-linked G proteins GNAQ and GNA11 (G(q)/G(11)), inducing a variety of cellular responses via second messenger pathways such as intracellular calcium mobilization, modulation of cyclic adenosine monophosphate (cAMP) production, and mitogen-activated protein kinases (MAPKs). After LCFAs binding, associates with beta-arrestin ARRB2 that acts as an adapter protein coupling the receptor to specific downstream signaling pathways, as well as mediating receptor endocytosis. In response to dietary fats, plays an important role in the regulation of adipocyte proliferation and differentiation. Acts as a receptor for omega-3 polyunsaturated fatty acids (PUFAs) at primary cilium of perivascular preadipocytes, initiating an adipogenic program via cAMP and CTCF-dependent chromatin remodeling that ultimately results in transcriptional activation of adipogenic genes and cell cycle entry. Induces differentiation of brown and beige adipocytes probably via autocrine and endocrine functions of FGF21 hormone. Contributes to the thermogenic activation of brown adipose tissue and the browning of white adipose tissue. Activates brown adipocytes by initiating intracellular calcium signaling leading to mitochondrial depolarization and fission, and overall increased mitochondrial respiration. Consequently stimulates fatty acid uptake and oxidation in mitochondria together with UCP1-mediated thermogenic respiration, eventually reducing fat mass. Regulates bi-potential differentiation of bone marrow mesenchymal stem cells toward osteoblasts or adipocytes likely by up-regulating distinct integrins. In response to dietary fats regulates hormone secretion and appetite. Stimulates GIP and GLP1 secretion from enteroendocrine cells as well as GCG secretion in pancreatic alpha cells, thereby playing a role in the regulation of blood glucose levels. Negatively regulates glucose-induced SST secretion in pancreatic delta cells. Mediates LCFAs inhibition of GHRL secretion, an appetite-controlling hormone. In taste buds, contributes to sensing of dietary fatty acids by the gustatory system. During the inflammatory response, promotes anti-inflammatory M2 macrophage differentiation in adipose tissue. Mediates the anti-inflammatory effects of omega-3 PUFAs via inhibition of NLRP3 inflammasome activation. In this pathway, interacts with adapter protein ARRB2 and inhibits the priming step triggered by Toll-like receptors (TLRs) at the level of TAK1 and TAB1. Further inhibits the activation step when ARRB2 directly associates with NLRP3, leading to inhibition of pro-inflammatory cytokine release. Mediates LCFAs anti-apoptotic effects. This Macaca fascicularis (Crab-eating macaque) protein is Free fatty acid receptor 4 (FFAR4).